The chain runs to 475 residues: U3 small nucleolar RNA-interacting protein 2 (475 aa).

The disordered stretch occupies residues 1–75 (MSATAAARKR…EEEEELEETA (75 aa)). Residues 8-40 (RKRGKPASGAGAGAGAGKRRRKADSAGDRGKSK) carry the Nuclear localization signal motif. Omega-N-methylarginine is present on R10. N6-acetyllysine is present on residues K12 and K25. A phosphoserine mark is found at S50, S51, S53, and S57. A compositionally biased stretch (acidic residues) spans 65 to 74 (EEEEEELEET). K113 participates in a covalent cross-link: Glycyl lysine isopeptide (Lys-Gly) (interchain with G-Cter in SUMO2). WD repeat units follow at residues 144–183 (GHQL…KLHV), 197–236 (GHSS…HLYT), 239–278 (GHRD…YVET), 281–320 (GHQD…QLVF), 322–360 (GHQG…PLAL), 374–413 (EQPF…RQLD), and 419–460 (PLVG…NSVC).

Belongs to the WD repeat RRP9 family. As to quaternary structure, interacts specifically with the U3 small nucleolar RNA (U3 snoRNA). Binds a sub-fragment of the U3 snoRNA surrounding the B/C motif (3UBC). This association with the U3BC RNA is dependent on the binding of a protein called 15.5K to the box B/C motif. The association of the protein with the U3BC RNA was found to be also dependent on a conserved RNA structure that flanks the box B/C motif. Part of the small subunit (SSU) processome, composed of more than 70 proteins and the RNA chaperone small nucleolar RNA (snoRNA) U3. In terms of processing, acetylation at Lys-12 and Lys-25 by KAT2B/PCAF under stress impairs pre-rRNA processing. Deacetylation by SIRT7 enhances RRP9-binding to U3 snoRNA, which is a prerequisite for pre-rRNA processing.

It localises to the nucleus. The protein localises to the nucleolus. Functionally, component of a nucleolar small nuclear ribonucleoprotein particle (snoRNP) thought to participate in the processing and modification of pre-ribosomal RNA (pre-rRNA). Part of the small subunit (SSU) processome, first precursor of the small eukaryotic ribosomal subunit. During the assembly of the SSU processome in the nucleolus, many ribosome biogenesis factors, an RNA chaperone and ribosomal proteins associate with the nascent pre-rRNA and work in concert to generate RNA folding, modifications, rearrangements and cleavage as well as targeted degradation of pre-ribosomal RNA by the RNA exosome. This chain is U3 small nucleolar RNA-interacting protein 2, found in Homo sapiens (Human).